Consider the following 123-residue polypeptide: F-box protein PP2-B3 (123 aa).

Positions 10–56 (PSPFDGLPENCISNIISFTTPRDACFAASVSKAFESAVQSDSVWEKF) constitute an F-box domain.

This is F-box protein PP2-B3 (PP2B3) from Arabidopsis thaliana (Mouse-ear cress).